A 71-amino-acid polypeptide reads, in one-letter code: ATP synthase subunit c (71 aa).

2 helical membrane passes run 5–25 (AIGI…AIIV) and 47–67 (FIGA…AFLL).

It belongs to the ATPase C chain family. In terms of assembly, F-type ATPases have 2 components, F(1) - the catalytic core - and F(0) - the membrane proton channel. F(1) has five subunits: alpha(3), beta(3), gamma(1), delta(1), epsilon(1). F(0) has three main subunits: a(1), b(2) and c(10-14). The alpha and beta chains form an alternating ring which encloses part of the gamma chain. F(1) is attached to F(0) by a central stalk formed by the gamma and epsilon chains, while a peripheral stalk is formed by the delta and b chains.

Its subcellular location is the cell membrane. F(1)F(0) ATP synthase produces ATP from ADP in the presence of a proton or sodium gradient. F-type ATPases consist of two structural domains, F(1) containing the extramembraneous catalytic core and F(0) containing the membrane proton channel, linked together by a central stalk and a peripheral stalk. During catalysis, ATP synthesis in the catalytic domain of F(1) is coupled via a rotary mechanism of the central stalk subunits to proton translocation. Functionally, key component of the F(0) channel; it plays a direct role in translocation across the membrane. A homomeric c-ring of between 10-14 subunits forms the central stalk rotor element with the F(1) delta and epsilon subunits. The polypeptide is ATP synthase subunit c (Shouchella clausii (strain KSM-K16) (Alkalihalobacillus clausii)).